The sequence spans 297 residues: UTP--glucose-1-phosphate uridylyltransferase YngB (297 aa).

An N-terminal signal peptide occupies residues 1–27; sequence MRKKVRKAVIPAAGLGTRFLPATKAQP.

It belongs to the UDPGP type 2 family. In terms of assembly, homodimer.

It catalyses the reaction alpha-D-glucose 1-phosphate + UTP + H(+) = UDP-alpha-D-glucose + diphosphate. The protein operates within glycolipid metabolism; diglucosyl-diacylglycerol biosynthesis. In terms of biological role, catalyzes the formation of UDP-glucose from glucose-1-phosphate and UTP. This is an intermediate step in the biosynthesis of diglucosyl-diacylglycerol (Glc2-DAG), i.e. the predominant glycolipid found in B.subtilis membrane, which is also used as a membrane anchor for lipoteichoic acid (LTA). YngB contributes to wall teichoic acid (WTA) glucosylation and glycolipid formation under anaerobic fermentative growth conditions. Might also enter other glycosylation pathways, leading to the decorating of other cell envelope components with glucose residues under anaerobic or other growth conditions. The polypeptide is UTP--glucose-1-phosphate uridylyltransferase YngB (yngB) (Bacillus subtilis (strain 168)).